Reading from the N-terminus, the 91-residue chain is Small ribosomal subunit protein bS20 (91 aa).

The segment at 1–25 is disordered; that stretch reads MANTKSAEKRHRQSLKRRARNVTVR. Residues 8 to 20 are compositionally biased toward basic residues; sequence EKRHRQSLKRRAR.

Belongs to the bacterial ribosomal protein bS20 family.

In terms of biological role, binds directly to 16S ribosomal RNA. The sequence is that of Small ribosomal subunit protein bS20 from Myxococcus xanthus (strain DK1622).